The chain runs to 411 residues: cAMP-dependent protein kinase regulatory subunit (411 aa).

The segment at 1 to 144 is disordered; sequence MAESAFPSAQ…SWTPPYHEKT (144 aa). The segment at 23 to 159 is dimerization and phosphorylation; it reads AAFQKISEED…RLKTAVSSNF (137 aa). The span at 46–58 shows a compositional bias: low complexity; it reads SANAAAASSSTGS. Positions 85–96 are enriched in acidic residues; the sequence is EEDEEGADEFPP. Residues 119-136 are compositionally biased toward polar residues; sequence TSVSAESLNPTSAGSDSW. Ser-120 is subject to Phosphoserine. Residues 160–289, Glu-238, Arg-247, 292–411, Glu-359, and Arg-368 contribute to the 3',5'-cyclic AMP site; these read LFSH…FLEE and LLSS…PVPA.

This sequence belongs to the cAMP-dependent kinase regulatory chain family. In terms of assembly, tetramer, composed of 2 regulatory (R) and 2 catalytic (C) subunits. In the presence of cAMP it dissociates into 2 active monomeric C subunits and an R dimer.

The chain is cAMP-dependent protein kinase regulatory subunit (pkaR) from Aspergillus niger.